The following is a 164-amino-acid chain: Large ribosomal subunit protein uL15 (164 aa).

Disordered stretches follow at residues 1-49 (MTKL…SIAG) and 143-164 (EKAG…SAEA). Gly residues predominate over residues 22–36 (RGPGSGKGKTAGRGV).

It belongs to the universal ribosomal protein uL15 family. In terms of assembly, part of the 50S ribosomal subunit.

In terms of biological role, binds to the 23S rRNA. This chain is Large ribosomal subunit protein uL15, found in Phenylobacterium zucineum (strain HLK1).